The following is a 382-amino-acid chain: Na(+)/H(+) antiporter NhaA 1 (382 aa).

The next 11 membrane-spanning stretches (helical) occupy residues 10–30, 45–65, 87–107, 116–136, 145–165, 170–190, 211–231, 252–272, 275–295, 326–346, and 353–373; these read EFSI…NISP, FSFH…IAAA, LLAT…LNAL, GWGI…SLVF, FLLL…ALFY, LPAA…AALL, AGLF…VPFL, LASF…LFGL, AGVT…SLVI, LVGL…GEAF, and GAAK…LAAG.

This sequence belongs to the NhaA Na(+)/H(+) (TC 2.A.33) antiporter family.

The protein resides in the cell inner membrane. It catalyses the reaction Na(+)(in) + 2 H(+)(out) = Na(+)(out) + 2 H(+)(in). Functionally, na(+)/H(+) antiporter that extrudes sodium in exchange for external protons. The protein is Na(+)/H(+) antiporter NhaA 1 of Pelobacter propionicus (strain DSM 2379 / NBRC 103807 / OttBd1).